Consider the following 76-residue polypeptide: uncharacterized protein (76 aa).

This is an uncharacterized protein from Human cytomegalovirus (strain AD169) (HHV-5).